The primary structure comprises 449 residues: Phosphoglucosamine mutase (449 aa).

Ser-100 (phosphoserine intermediate) is an active-site residue. The Mg(2+) site is built by Ser-100, Asp-241, Asp-243, and Asp-245. Ser-100 is modified (phosphoserine).

This sequence belongs to the phosphohexose mutase family. Mg(2+) is required as a cofactor. Post-translationally, activated by phosphorylation.

It carries out the reaction alpha-D-glucosamine 1-phosphate = D-glucosamine 6-phosphate. In terms of biological role, catalyzes the conversion of glucosamine-6-phosphate to glucosamine-1-phosphate. The protein is Phosphoglucosamine mutase of Clostridium kluyveri (strain NBRC 12016).